Here is a 462-residue protein sequence, read N- to C-terminus: MAYKLILAAFAATALAAPVEERQSCSNGVWAQCGGQNWSGTPCCTSGNKCVKLNDFYSQCQPGSAEPSSTAAGPSSTTATKTTATGGSSTTAGGSVTSAPPAASDNPYAGVDLWANNYYRSEVMNLAVPKLSGAKATAAAKVADVPSFQWMDTYDHISLMEDTLADIRKANKAGGKYAGQFVVYDLPNRDCAAAASNGEYSLDKDGANKYKAYIAKIKGILQNYSDTKVILVIEPDSLANLVTNLNVDKCAKAESAYKELTVYAIKELNLPNVSMYLDAGHGGWLGWPANIGPAAKLYAQIYKDAGKPSRVRGLVTNVSNYNGWKLSTKPDYTESNPNYDEQRYINAFAPLLAQEGWSNVKFIVDQGRSGKQPTGQKAQGDWCNAKGTGFGLRPSTNTGDALADAFVWVKPGGESDGTSDTSAARYDYHCGLDDALKPAPEAGTWFQAYFEQLLDNANPSFL.

A signal peptide spans 1–16 (MAYKLILAAFAATALA). The CBM1 domain occupies 25-61 (CSNGVWAQCGGQNWSGTPCCTSGNKCVKLNDFYSQCQ). Intrachain disulfides connect cysteine 33–cysteine 50 and cysteine 44–cysteine 60. The N-linked (GlcNAc...) asparagine glycan is linked to asparagine 37. Low complexity predominate over residues 64–100 (SAEPSSTAAGPSSTTATKTTATGGSSTTAGGSVTSAP). The segment at 64–102 (SAEPSSTAAGPSSTTATKTTATGGSSTTAGGSVTSAPPA) is disordered. The tract at residues 66-99 (EPSSTAAGPSSTTATKTTATGGSSTTAGGSVTSA) is linker. Residues 100-462 (PPAASDNPYA…LLDNANPSFL (363 aa)) form a catalytic region. The active site involves aspartate 190. Cysteine 191 and cysteine 250 are disulfide-bonded. N-linked (GlcNAc...) asparagine glycosylation is present at asparagine 223. Aspartate 236 serves as the catalytic Proton donor. 2 N-linked (GlcNAc...) asparagine glycosylation sites follow: asparagine 272 and asparagine 317. A disulfide bridge links cysteine 383 with cysteine 430. Aspartate 416 functions as the Nucleophile in the catalytic mechanism.

Belongs to the glycosyl hydrolase 6 (cellulase B) family.

It carries out the reaction Endohydrolysis of (1-&gt;4)-beta-D-glucosidic linkages in cellulose, lichenin and cereal beta-D-glucans.. The sequence is that of Putative endoglucanase type B from Fusarium oxysporum (Fusarium vascular wilt).